A 140-amino-acid polypeptide reads, in one-letter code: uncharacterized protein (140 aa).

Positions 27–65 form a coiled coil; it reads LLGEVSELELQKICFNRSLRNEINQLEEQNDISFVRVER.

This is an uncharacterized protein from Pasteurella multocida (strain Pm70).